Here is a 224-residue protein sequence, read N- to C-terminus: uncharacterized protein (224 aa).

This is an uncharacterized protein from Mycobacterium tuberculosis (strain ATCC 25618 / H37Rv).